The chain runs to 172 residues: Disulfide bond formation protein B (172 aa).

Residues 1 to 11 (MNPFRWGFRAQ) lie on the Cytoplasmic side of the membrane. A helical membrane pass occupies residues 12–28 (FLLGFLACAGLLAYAIY). At 29–46 (VQLHLGLEPCPLCIFQRI) the chain is on the periplasmic side. Residues Cys38 and Cys41 are joined by a disulfide bond. A helical membrane pass occupies residues 47–63 (AFATLALLFLLGALHGP). At 64–70 (RGAGGRK) the chain is on the cytoplasmic side. The chain crosses the membrane as a helical span at residues 71–88 (AYGVLAFIAAGVGMGIAA). The Periplasmic portion of the chain corresponds to 89-145 (RHVWVQIRPKDMMSSCGPPLSFLSETMGPFEVFRTVLTGTGDCGNIDWRFLGLSMPM). Cysteines 104 and 131 form a disulfide. The helical transmembrane segment at 146–164 (WSMVWFVGLALWALYAGFK) threads the bilayer. At 165–172 (HRGPRKLF) the chain is on the cytoplasmic side.

It belongs to the DsbB family.

The protein localises to the cell inner membrane. Functionally, required for disulfide bond formation in some periplasmic proteins. Acts by oxidizing the DsbA protein. The sequence is that of Disulfide bond formation protein B from Xanthomonas campestris pv. campestris (strain 8004).